We begin with the raw amino-acid sequence, 457 residues long: Putative HD domain-containing protein L394 (457 aa).

Residues 65–206 enclose the HD domain; sequence RLEHSIGVYD…GIDVDKFDYL (142 aa).

This is Putative HD domain-containing protein L394 from Acanthamoeba polyphaga mimivirus (APMV).